A 156-amino-acid polypeptide reads, in one-letter code: Small ribosomal subunit protein uS7 (156 aa).

It belongs to the universal ribosomal protein uS7 family. As to quaternary structure, part of the 30S ribosomal subunit. Contacts proteins S9 and S11.

Its function is as follows. One of the primary rRNA binding proteins, it binds directly to 16S rRNA where it nucleates assembly of the head domain of the 30S subunit. Is located at the subunit interface close to the decoding center, probably blocks exit of the E-site tRNA. This is Small ribosomal subunit protein uS7 from Vibrio campbellii (strain ATCC BAA-1116).